The chain runs to 310 residues: Probable GTP 3',8-cyclase (310 aa).

Residues 5–232 (RFGRPVTNLR…RRRKYFIPID (228 aa)) enclose the Radical SAM core domain. R14 is a binding site for GTP. [4Fe-4S] cluster contacts are provided by C21 and C25. Y27 is an S-adenosyl-L-methionine binding site. C28 contributes to the [4Fe-4S] cluster binding site. K61 lines the GTP pocket. G65 lines the S-adenosyl-L-methionine pocket. T90 contacts GTP. S114 contacts S-adenosyl-L-methionine. K150 is a binding site for GTP. M189 contacts S-adenosyl-L-methionine. C250 and C253 together coordinate [4Fe-4S] cluster. 255–257 (RLR) contributes to the GTP binding site. C267 provides a ligand contact to [4Fe-4S] cluster.

It belongs to the radical SAM superfamily. MoaA family. [4Fe-4S] cluster serves as cofactor.

The enzyme catalyses GTP + AH2 + S-adenosyl-L-methionine = (8S)-3',8-cyclo-7,8-dihydroguanosine 5'-triphosphate + 5'-deoxyadenosine + L-methionine + A + H(+). The protein operates within cofactor biosynthesis; molybdopterin biosynthesis. Functionally, catalyzes the cyclization of GTP to (8S)-3',8-cyclo-7,8-dihydroguanosine 5'-triphosphate. In Pyrococcus horikoshii (strain ATCC 700860 / DSM 12428 / JCM 9974 / NBRC 100139 / OT-3), this protein is Probable GTP 3',8-cyclase.